Reading from the N-terminus, the 304-residue chain is tRNA uridine(34) hydroxylase (304 aa).

Residues 124–219 (QDEETLLIDT…YLETIPKEES (96 aa)) enclose the Rhodanese domain. The Cysteine persulfide intermediate role is filled by C179.

Belongs to the TrhO family.

It carries out the reaction uridine(34) in tRNA + AH2 + O2 = 5-hydroxyuridine(34) in tRNA + A + H2O. Its function is as follows. Catalyzes oxygen-dependent 5-hydroxyuridine (ho5U) modification at position 34 in tRNAs. This is tRNA uridine(34) hydroxylase from Bartonella quintana (strain Toulouse) (Rochalimaea quintana).